The chain runs to 937 residues: Protein translocase subunit SecA (937 aa).

Residues glutamine 87, 105–109, and aspartate 494 each bind ATP; that span reads GEGKT. Residues 881–937 are disordered; the sequence is RGLNYIGPDEGGRASVHSDAEEYGGGTPAAAGTRRERREAARAEGKGKRGPKSRRKH. Basic and acidic residues-rich tracts occupy residues 890 to 900 and 913 to 927; these read EGGRASVHSDA and TRRE…EGKG. Basic residues predominate over residues 928 to 937; the sequence is KRGPKSRRKH.

It belongs to the SecA family. As to quaternary structure, monomer and homodimer. Part of the essential Sec protein translocation apparatus which comprises SecA, SecYEG and auxiliary proteins SecDF. Other proteins may also be involved.

The protein resides in the cell membrane. It localises to the cytoplasm. The enzyme catalyses ATP + H2O + cellular proteinSide 1 = ADP + phosphate + cellular proteinSide 2.. Part of the Sec protein translocase complex. Interacts with the SecYEG preprotein conducting channel. Has a central role in coupling the hydrolysis of ATP to the transfer of proteins into and across the cell membrane, serving as an ATP-driven molecular motor driving the stepwise translocation of polypeptide chains across the membrane. This is Protein translocase subunit SecA from Nocardia farcinica (strain IFM 10152).